Reading from the N-terminus, the 113-residue chain is Hydrogenase maturation factor HypA (113 aa).

His2 is a Ni(2+) binding site. Zn(2+) contacts are provided by Cys73, Cys76, Cys89, and Cys92.

The protein belongs to the HypA/HybF family.

In terms of biological role, involved in the maturation of [NiFe] hydrogenases. Required for nickel insertion into the metal center of the hydrogenase. The sequence is that of Hydrogenase maturation factor HypA from Chlorobaculum parvum (strain DSM 263 / NCIMB 8327) (Chlorobium vibrioforme subsp. thiosulfatophilum).